Here is a 331-residue protein sequence, read N- to C-terminus: ADP-L-glycero-D-manno-heptose-6-epimerase (331 aa).

NADP(+)-binding positions include 11–12, 32–33, Lys-39, Lys-54, 75–79, and Asn-92; these read FI, DN, and EGACS. Catalysis depends on Tyr-139, which acts as the Proton acceptor. Position 143 (Lys-143) interacts with NADP(+). Substrate is bound at residue Asn-168. Val-169 and Lys-177 together coordinate NADP(+). Lys-177 (proton acceptor) is an active-site residue. Residues Arg-179, His-186, 200-203, Arg-213, and Tyr-292 contribute to the substrate site; that span reads FGEY.

It belongs to the NAD(P)-dependent epimerase/dehydratase family. HldD subfamily. In terms of assembly, homopentamer. The cofactor is NADP(+).

The catalysed reaction is ADP-D-glycero-beta-D-manno-heptose = ADP-L-glycero-beta-D-manno-heptose. It participates in nucleotide-sugar biosynthesis; ADP-L-glycero-beta-D-manno-heptose biosynthesis; ADP-L-glycero-beta-D-manno-heptose from D-glycero-beta-D-manno-heptose 7-phosphate: step 4/4. Catalyzes the interconversion between ADP-D-glycero-beta-D-manno-heptose and ADP-L-glycero-beta-D-manno-heptose via an epimerization at carbon 6 of the heptose. The sequence is that of ADP-L-glycero-D-manno-heptose-6-epimerase from Cupriavidus taiwanensis (strain DSM 17343 / BCRC 17206 / CCUG 44338 / CIP 107171 / LMG 19424 / R1) (Ralstonia taiwanensis (strain LMG 19424)).